The chain runs to 320 residues: Protein phosphatase PTC7 homolog fig (320 aa).

Residues 49–315 form the PPM-type phosphatase domain; sequence PYLVTAVQGR…DDITLILASV (267 aa). Mn(2+) contacts are provided by D93, G94, and D238.

This sequence belongs to the PP2C family. The cofactor is Mg(2+). Mn(2+) serves as cofactor.

The enzyme catalyses O-phospho-L-seryl-[protein] + H2O = L-seryl-[protein] + phosphate. It catalyses the reaction O-phospho-L-threonyl-[protein] + H2O = L-threonyl-[protein] + phosphate. This chain is Protein phosphatase PTC7 homolog fig, found in Drosophila yakuba (Fruit fly).